The sequence spans 381 residues: ATP synthase subunit a (381 aa).

The disordered stretch occupies residues 24-73 (PVAAPVEQHGQAPEAAPDAHGSPAGEPGAAVEAHAAAAEHGEAAGHEGGH). The segment covering 47–59 (AGEPGAAVEAHAA) has biased composition (low complexity). The span at 60–73 (AAEHGEAAGHEGGH) shows a compositional bias: basic and acidic residues. 6 helical membrane passes run 128–148 (KHVV…LGAV), 190–210 (LVTA…PFSA), 215–235 (NLSV…YAAI), 255–275 (LAPL…TKPF), 290–310 (FVIL…VAFG), and 316–336 (LSIF…FTML). Positions 351–360 (DHGHAEEHGH) are enriched in basic and acidic residues. Residues 351–381 (DHGHAEEHGHAGPAAGSEHGSHVAGASPGHG) are disordered.

The protein belongs to the ATPase A chain family. In terms of assembly, F-type ATPases have 2 components, CF(1) - the catalytic core - and CF(0) - the membrane proton channel. CF(1) has five subunits: alpha(3), beta(3), gamma(1), delta(1), epsilon(1). CF(0) has three main subunits: a(1), b(2) and c(9-12). The alpha and beta chains form an alternating ring which encloses part of the gamma chain. CF(1) is attached to CF(0) by a central stalk formed by the gamma and epsilon chains, while a peripheral stalk is formed by the delta and b chains.

It localises to the cell inner membrane. Its function is as follows. Key component of the proton channel; it plays a direct role in the translocation of protons across the membrane. The protein is ATP synthase subunit a of Anaeromyxobacter dehalogenans (strain 2CP-C).